We begin with the raw amino-acid sequence, 479 residues long: MTVILPDFLKSNVLVVGDIMLDRYWYGSTNKISFESPVPVVEINNVIDIPGGAANVAMNIASLGGRVRLIGLVGVDDAAQRLKKRLTECKIKWNFISVDTHPTIMKLRVMSRNQQMIRLDFEKKFNNVNTDQLMNVIKVYLPQYKVLALSDYAKGTLDCVEEIIKIARFFKIPIIIDPKGVQFSKYKGATILTPNMSEFEAIVGFCSNEEIIIKRAKELMNEYDLLALLITRSDQGMTLLQRSLDPLYFSAQSKEVYDVTGAGDTVVGVLSAALSLGENLEKSCFLANAAAGSVVEKSGTSTVNVAEINNVVQKYEYTKIPTGIVDRGLLKYVVSVVRGRGEKIVMTNGVFDILHYGHISYLMDAKKLGHRLIVAVNSDKSTRRLKGKHRPINVLERRMFVLSALSMVDWVVSFDEDNPIQLILEISPDFLVKGGDYNVNNIVGGKEVLRQGGQVCVLKFQEDCSSSSIIDTMEINEIN.

Residues 1-319 (MTVILPDFLK…NVVQKYEYTK (319 aa)) are ribokinase. 195–198 (NMSE) is an ATP binding site. Asp264 is a catalytic residue. The segment at 346 to 479 (MTNGVFDILH…IDTMEINEIN (134 aa)) is cytidylyltransferase.

In the N-terminal section; belongs to the carbohydrate kinase PfkB family. The protein in the C-terminal section; belongs to the cytidylyltransferase family. As to quaternary structure, homodimer.

It catalyses the reaction D-glycero-beta-D-manno-heptose 7-phosphate + ATP = D-glycero-beta-D-manno-heptose 1,7-bisphosphate + ADP + H(+). The catalysed reaction is D-glycero-beta-D-manno-heptose 1-phosphate + ATP + H(+) = ADP-D-glycero-beta-D-manno-heptose + diphosphate. It functions in the pathway nucleotide-sugar biosynthesis; ADP-L-glycero-beta-D-manno-heptose biosynthesis; ADP-L-glycero-beta-D-manno-heptose from D-glycero-beta-D-manno-heptose 7-phosphate: step 1/4. It participates in nucleotide-sugar biosynthesis; ADP-L-glycero-beta-D-manno-heptose biosynthesis; ADP-L-glycero-beta-D-manno-heptose from D-glycero-beta-D-manno-heptose 7-phosphate: step 3/4. Its function is as follows. Catalyzes the phosphorylation of D-glycero-D-manno-heptose 7-phosphate at the C-1 position to selectively form D-glycero-beta-D-manno-heptose-1,7-bisphosphate. Functionally, catalyzes the ADP transfer from ATP to D-glycero-beta-D-manno-heptose 1-phosphate, yielding ADP-D-glycero-beta-D-manno-heptose. This is Bifunctional protein HldE from Blochmanniella floridana.